A 556-amino-acid chain; its full sequence is uncharacterized protein (556 aa).

Disordered regions lie at residues 1–40 (MSNS…TNEN), 80–243 (NTTQ…KQSW), 278–324 (YDSD…SSLP), 363–391 (RTKQ…KFVD), and 422–525 (DSKQ…ENSA). Positions 7–25 (NNNNNTNNNNNNNNNNNGN) are enriched in low complexity. Over residues 30–40 (EEPDDDSTNEN) the composition is skewed to acidic residues. 2 stretches are compositionally biased toward low complexity: residues 80 to 133 (NTTQ…GTRS) and 164 to 181 (NDNN…NDSN). Positions 182–192 (IVDDDEDEEEF) are enriched in acidic residues. A compositionally biased stretch (low complexity) spans 207-226 (STSSPSSTSSPIVSPQTQTS). Residues 227-243 (KLESSMDVSPSSGKQSW) are compositionally biased toward polar residues. Low complexity-rich tracts occupy residues 292–322 (NNSS…NSSS), 369–388 (KVQQ…NNNK), and 425–525 (QQNV…ENSA). The helical transmembrane segment at 528 to 548 (GSFIKNAVIFIFILLLMVVGF) threads the bilayer.

It is found in the membrane. This is an uncharacterized protein from Dictyostelium discoideum (Social amoeba).